A 938-amino-acid polypeptide reads, in one-letter code: Kexin (938 aa).

The signal sequence occupies residues 1–20 (MLPIKLLIFILGYLLSPTLQ). 2 N-linked (GlcNAc...) asparagine glycosylation sites follow: asparagine 41 and asparagine 193. One can recognise a Peptidase S8 domain in the interval 179 to 489 (QWHLINLKYP…YGKTDAYKMV (311 aa)). Catalysis depends on charge relay system residues aspartate 213 and histidine 251. 2 cysteine pairs are disulfide-bonded: cysteine 267-cysteine 414 and cysteine 359-cysteine 389. Serine 422 (charge relay system) is an active-site residue. N-linked (GlcNAc...) asparagine glycosylation is found at asparagine 441, asparagine 512, asparagine 539, and asparagine 599. The P/Homo B domain maps to 498 to 647 (VKPQAWYYSD…QFRIFGESID (150 aa)). Residues 671–768 (EKQNSKSTTT…DNDNDNGNKK (98 aa)) are disordered. Low complexity predominate over residues 677 to 691 (STTTTSSTTTATTTS). The segment covering 711 to 735 (KVDNSASITTSQTASLTSSNEQHQP) has biased composition (polar residues). Over residues 740-762 (SDSDSDTDDENKQEGEEDNDNDN) the composition is skewed to acidic residues. Residues 775–795 (GFYLMSIAVVGFIAVLLVMKF) form a helical membrane-spanning segment. Over 796 to 924 (HKTPGSGRRR…SGTSTKKYKD (129 aa)) the chain is Cytoplasmic. Basic residues predominate over residues 798–808 (TPGSGRRRRRR). The segment at 798–938 (TPGSGRRRRR…EDHKDVVGTQ (141 aa)) is disordered. Acidic residues predominate over residues 820 to 831 (DYSDSDDDEDDF). The segment covering 832–849 (DTRRADDDSFDLGHRNDQ) has biased composition (basic and acidic residues). The span at 850-859 (RVVSASQQQR) shows a compositional bias: low complexity. The segment covering 860–874 (QYDRQQDETRDRLFD) has biased composition (basic and acidic residues). Over residues 902 to 919 (QQSAKAPSNSEGNSGTST) the composition is skewed to polar residues. A compositionally biased stretch (basic and acidic residues) spans 921-938 (KYKDNEADEDHKDVVGTQ).

It belongs to the peptidase S8 family. Furin subfamily. It depends on Ca(2+) as a cofactor. O-glycosylated.

The protein resides in the golgi apparatus. The protein localises to the trans-Golgi network membrane. It catalyses the reaction Cleavage of -Lys-Arg-|-Xaa- and -Arg-Arg-|-Xaa- bonds to process yeast alpha-factor pheromone and killer toxin precursors.. The protein is Kexin (KEX2) of Candida albicans (strain WO-1) (Yeast).